A 1189-amino-acid polypeptide reads, in one-letter code: MEENNQNQCIPYNCLSNPEEVLLDGERISTGNSSIDISLSLVQFLVSNFVPGGGFLVGLIDFVWGIVGPSQWDAFLVQIEQLINERIAEFARNAAIANLEGLGNNFNIYVEAFKEWEEDPNNPETRTRVIDRFRILDGLLERDIPSFRISGFEVPLLSVYAQAANLHLAILRDSVIFGERWGLTTINVNENYNRLIRHIDEYADHCANTYNRGLNNLPKSTYQDWITYNRLRRDLTLTVLDIAAFFPNYDNRRYPIQPVGQLTREVYTDPLINFNPQLQSVAQLPTFNVMESSRIRNPHLFDILNNLTIFTDWFSVGRNFYWGGHRVISSLIGGGNITSPIYGREANQEPPRSFTFNGPVFRTLSNPTLRLLQQPWPAPPFNLRGVEGVEFSTPTNSFTYRGRGTVDSLTELPPEDNSVPPREGYSHRLCHATFVQRSGTPFLTTGVVFSWTDRSATLTNTIDPERINQIPLVKGFRVWGGTSVITGPGFTGGDILRRNTFGDFVSLQVNINSPITQRYRLRFRYASSRDARVIVLTGAASTGVGGQVSVNMPLQKTMEIGENLTSRTFRYTDFSNPFSFRANPDIIGISEQPLFGAGSISSGELYIDKIEIILADATFEAESDLERAQKAVNALFTSSNQIGLKTDVTDYHIDQVSNLVDCLSDEFCLDEKRELSEKVKHAKRLSDERNLLQDPNFRGINRQPDRGWRGSTDITIQGGDDVFKENYVTLPGTVDECYPTYLYQKIDESKLKAYTRYELRGYIEDSQDLEIYLIRYNAKHEIVNVPGTGSLWPLSAQSPIGKCGEPNRCAPHLEWNPDLDCSCRDGEKCAHHSHHFTLDIDVGCTDLNEDLGVWVIFKIKTQDGHARLGNLEFLEEKPLLGEALARVKRAEKKWRDKREKLQLETNIVYKEAKESVDALFVNSQYDRLQVDTNIAMIHAADKRVHRIREAYLPELSVIPGVNAAIFEELEGRIFTAYSLYDARNVIKNGDFNNGLLCWNVKGHVDVEEQNNHRSVLVIPEWEAEVSQEVRVCPGRGYILRVTAYKEGYGEGCVTIHEIEDNTDELKFSNCVEEEVYPNNTVTCNNYTGTQEEYEGTYTSRNQGYDEAYGNNPSVPADYASVYEEKSYTDGRRENPCESNRGYGDYTPLPAGYVTKDLEYFPETDKVWIEIGETEGTFIVDSVELLLMEE.

The protein belongs to the delta endotoxin family.

In terms of biological role, promotes colloidosmotic lysis by binding to the midgut epithelial cells of many lepidopteran larvae including Spodoptera species. In Bacillus thuringiensis subsp. entomocidus, this protein is Pesticidal crystal protein Cry1Ca (cry1Ca).